The following is a 311-amino-acid chain: Putative dihydroorotate dehydrogenase A (fumarate) (311 aa).

Substrate contacts are provided by residues Lys-45, 69–73 (NSMGL), and Asn-128. 45 to 46 (KT) contributes to the FMN binding site. Asn-128 lines the FMN pocket. Cys-131 acts as the Nucleophile in catalysis. Residues Lys-165 and Val-193 each contribute to the FMN site. 194–195 (NS) is a substrate binding site. FMN-binding positions include Gly-220, 248-249 (GG), and 270-271 (GT).

The protein belongs to the dihydroorotate dehydrogenase family. Type 1 subfamily. In terms of assembly, homodimer. Requires FMN as cofactor.

The protein resides in the cytoplasm. It carries out the reaction (S)-dihydroorotate + fumarate = orotate + succinate. It functions in the pathway pyrimidine metabolism; UMP biosynthesis via de novo pathway. In terms of biological role, catalyzes the conversion of dihydroorotate to orotate with fumarate as the electron acceptor. The polypeptide is Putative dihydroorotate dehydrogenase A (fumarate) (pyrD) (Streptococcus pyogenes serotype M18 (strain MGAS8232)).